A 278-amino-acid polypeptide reads, in one-letter code: Tumor necrosis factor ligand superfamily member 6 (278 aa).

The Cytoplasmic segment spans residues 1–77; the sequence is MQQPVNYPCP…SPLKKKDNIE (77 aa). A disordered region spans residues 26 to 68; it reads PGSVFSCPSSGPRGPGQRRPPPPPPPPSPLPPPSQPPPLPPLS. A compositionally biased stretch (low complexity) spans 33–42; the sequence is PSSGPRGPGQ. The segment covering 43–68 has biased composition (pro residues); that stretch reads RRPPPPPPPPSPLPPPSQPPPLPPLS. The chain crosses the membrane as a helical; Signal-anchor for type II membrane protein span at residues 78–99; sequence LWLPVIFFMVLVALVGMGLGMY. Residues 100–278 lie on the Extracellular side of the membrane; it reads QLFHLQKELA…SKTFFGLYKL (179 aa). Asn-116 carries N-linked (GlcNAc...) asparagine glycosylation. The segment covering 125-135 has biased composition (polar residues); the sequence is EKQIANPSTPS. A disordered region spans residues 125-147; it reads EKQIANPSTPSETKKPRSVAHLT. The region spanning 142–278 is the THD domain; it reads SVAHLTGNPR…SKTFFGLYKL (137 aa). Cys-199 and Cys-230 are oxidised to a cystine. Asn-247 and Asn-257 each carry an N-linked (GlcNAc...) asparagine glycan.

Belongs to the tumor necrosis factor family. As to quaternary structure, homotrimer. Interacts with ARHGAP9, BAIAP2L1, BTK, CACNB3, CACNB4, CRK, DLG2, DNMBP, DOCK4, EPS8L3, FGR, FYB1, FYN, HCK, ITK, ITSN2, KALRN, LYN, MACC1, MIA, MPP4, MYO15A, NCF1, NCK1, NCK2, NCKIPSD, OSTF1, PIK3R1, PSTPIP1, RIMBP3C, SAMSN1, SH3GL3, SH3PXD2B, SH3PXD2A, SH3RF2, SKAP2, SNX33, SNX9, SORBS3, SPTA1, SRC, SRGAP1, SRGAP2, SRGAP3, TEC, TJP3 and YES1. In terms of processing, the soluble form derives from the membrane form by proteolytic processing. The membrane-bound form undergoes two successive intramembrane proteolytic cleavages. The first one is processed by ADAM10 producing an N-terminal fragment, which lacks the receptor-binding extracellular domain. This ADAM10-processed FasL (FasL APL) remnant form is still membrane anchored and further processed by SPPL2A that liberates the FasL intracellular domain (FasL ICD). FasL shedding by ADAM10 is a prerequisite for subsequent intramembrane cleavage by SPPL2A in T-cells. Post-translationally, phosphorylated by FGR on tyrosine residues; this is required for ubiquitination and subsequent internalization. N-glycosylated. In terms of processing, monoubiquitinated. As to expression, expressed in activated splenocytes and thymocytes. Moderate or weak expression found in small intestines, kidney and lung.

It localises to the cell membrane. Its subcellular location is the cytoplasmic vesicle lumen. The protein localises to the lysosome lumen. The protein resides in the secreted. It is found in the nucleus. Functionally, cytokine that binds to TNFRSF6/FAS, a receptor that transduces the apoptotic signal into cells. Involved in cytotoxic T-cell-mediated apoptosis, natural killer cell-mediated apoptosis and in T-cell development. Initiates fratricidal/suicidal activation-induced cell death (AICD) in antigen-activated T-cells contributing to the termination of immune responses. TNFRSF6/FAS-mediated apoptosis also has a role in the induction of peripheral tolerance. Binds to TNFRSF6B/DcR3, a decoy receptor that blocks apoptosis. Its function is as follows. Induces FAS-mediated activation of NF-kappa-B, initiating non-apoptotic signaling pathways. Can induce apoptosis but does not appear to be essential for this process. Cytoplasmic form induces gene transcription inhibition. This is Tumor necrosis factor ligand superfamily member 6 (Faslg) from Rattus norvegicus (Rat).